Consider the following 56-residue polypeptide: uncharacterized protein (56 aa).

A helical membrane pass occupies residues 2-22; that stretch reads ILYIIVAISILLNIILGIKVI.

The protein localises to the membrane. This is an uncharacterized protein from Methanocaldococcus jannaschii (strain ATCC 43067 / DSM 2661 / JAL-1 / JCM 10045 / NBRC 100440) (Methanococcus jannaschii).